Reading from the N-terminus, the 389-residue chain is Cobalt-precorrin-5B C(1)-methyltransferase (389 aa).

Positions 1-25 (MESRADHAVPADEGHGATEPPRGRD) are disordered.

It belongs to the CbiD family.

It catalyses the reaction Co-precorrin-5B + S-adenosyl-L-methionine = Co-precorrin-6A + S-adenosyl-L-homocysteine. It functions in the pathway cofactor biosynthesis; adenosylcobalamin biosynthesis; cob(II)yrinate a,c-diamide from sirohydrochlorin (anaerobic route): step 6/10. Functionally, catalyzes the methylation of C-1 in cobalt-precorrin-5B to form cobalt-precorrin-6A. The sequence is that of Cobalt-precorrin-5B C(1)-methyltransferase from Nitratidesulfovibrio vulgaris (strain ATCC 29579 / DSM 644 / CCUG 34227 / NCIMB 8303 / VKM B-1760 / Hildenborough) (Desulfovibrio vulgaris).